A 740-amino-acid chain; its full sequence is Dipeptidyl peptidase family member 6 (740 aa).

A topological domain (cytoplasmic) is located at residue methionine 1. A helical; Signal-anchor for type II membrane protein transmembrane segment spans residues 2-22; the sequence is LFLPILILNLLIITHAIDIIP. Residues 23–740 are Lumenal-facing; it reads REVLFQDPKY…VMNRIFPVQG (718 aa). 3 N-linked (GlcNAc...) asparagine glycosylation sites follow: asparagine 108, asparagine 308, and asparagine 506. Residues serine 516, aspartate 604, and histidine 636 each act as charge relay system in the active site. A disulfide bond links cysteine 535 and cysteine 658. Residue asparagine 672 is glycosylated (N-linked (GlcNAc...) asparagine).

The protein belongs to the peptidase S9B family. DPPIV subfamily.

The protein resides in the cell membrane. Its function is as follows. Removes N-terminal dipeptides sequentially from polypeptides. Essential for control of distal tip cell migration. This Caenorhabditis elegans protein is Dipeptidyl peptidase family member 6 (dpf-6).